We begin with the raw amino-acid sequence, 835 residues long: Protein translocase subunit SecA 1 (835 aa).

ATP contacts are provided by residues Q85, G103–T107, and D492. The interval V788 to V807 is disordered. The Zn(2+) site is built by C819, C821, C830, and C831.

This sequence belongs to the SecA family. In terms of assembly, monomer and homodimer. Part of the essential Sec protein translocation apparatus which comprises SecA, SecYEG and auxiliary proteins SecDF. Other proteins may also be involved. It depends on Zn(2+) as a cofactor.

It localises to the cell membrane. Its subcellular location is the cytoplasm. It carries out the reaction ATP + H2O + cellular proteinSide 1 = ADP + phosphate + cellular proteinSide 2.. Functionally, part of the Sec protein translocase complex. Interacts with the SecYEG preprotein conducting channel. Has a central role in coupling the hydrolysis of ATP to the transfer of proteins into and across the cell membrane, serving as an ATP-driven molecular motor driving the stepwise translocation of polypeptide chains across the membrane. This is Protein translocase subunit SecA 1 from Bacillus anthracis.